Consider the following 66-residue polypeptide: Large ribosomal subunit protein bL35 (66 aa).

Belongs to the bacterial ribosomal protein bL35 family.

This chain is Large ribosomal subunit protein bL35, found in Treponema denticola (strain ATCC 35405 / DSM 14222 / CIP 103919 / JCM 8153 / KCTC 15104).